The primary structure comprises 649 residues: Microtubule-associated protein VP6 (649 aa).

It localises to the virion. The protein resides in the host cytoplasm. The protein localises to the host cytoskeleton. Its function is as follows. Minor inner capsid component. Displays NTPase and RNA 5'-triphosphatase (RTPase) activities. May function as a cofactor of polymerase VP2. Associates with microtubules and plays a role in the formation, structural organization and morphology of viral inclusions, where the assembly of cores and the replication of viral RNA occur. This Cryphonectria parasitica (Chestnut blight fungus) protein is Microtubule-associated protein VP6 (S6).